Reading from the N-terminus, the 98-residue chain is NADH-ubiquinone oxidoreductase chain 4L (98 aa).

The next 3 helical transmembrane spans lie at 2–22 (PSISTNIILAFTAALTGMLVF), 29–49 (SLLCLEGMMLSMFILSTLTIM), and 61–81 (ILLLVFAACEAAIGLALLVMM).

This sequence belongs to the complex I subunit 4L family. In terms of assembly, core subunit of respiratory chain NADH dehydrogenase (Complex I) which is composed of 45 different subunits.

It is found in the mitochondrion inner membrane. The enzyme catalyses a ubiquinone + NADH + 5 H(+)(in) = a ubiquinol + NAD(+) + 4 H(+)(out). Its function is as follows. Core subunit of the mitochondrial membrane respiratory chain NADH dehydrogenase (Complex I) which catalyzes electron transfer from NADH through the respiratory chain, using ubiquinone as an electron acceptor. Part of the enzyme membrane arm which is embedded in the lipid bilayer and involved in proton translocation. This Lepilemur seali (Seal's sportive lemur) protein is NADH-ubiquinone oxidoreductase chain 4L (MT-ND4L).